The primary structure comprises 137 residues: ATP synthase epsilon chain (137 aa).

This sequence belongs to the ATPase epsilon chain family. In terms of assembly, F-type ATPases have 2 components, CF(1) - the catalytic core - and CF(0) - the membrane proton channel. CF(1) has five subunits: alpha(3), beta(3), gamma(1), delta(1), epsilon(1). CF(0) has three main subunits: a, b and c.

It is found in the cell inner membrane. Functionally, produces ATP from ADP in the presence of a proton gradient across the membrane. The chain is ATP synthase epsilon chain from Magnetococcus marinus (strain ATCC BAA-1437 / JCM 17883 / MC-1).